The following is a 284-amino-acid chain: 4-diphosphocytidyl-2-C-methyl-D-erythritol kinase (284 aa).

Residue K14 is part of the active site. 97-107 (PMGGGVGGGSS) contacts ATP. The active site involves D139.

Belongs to the GHMP kinase family. IspE subfamily.

It catalyses the reaction 4-CDP-2-C-methyl-D-erythritol + ATP = 4-CDP-2-C-methyl-D-erythritol 2-phosphate + ADP + H(+). It functions in the pathway isoprenoid biosynthesis; isopentenyl diphosphate biosynthesis via DXP pathway; isopentenyl diphosphate from 1-deoxy-D-xylulose 5-phosphate: step 3/6. Catalyzes the phosphorylation of the position 2 hydroxy group of 4-diphosphocytidyl-2C-methyl-D-erythritol. This chain is 4-diphosphocytidyl-2-C-methyl-D-erythritol kinase, found in Pseudoalteromonas translucida (strain TAC 125).